We begin with the raw amino-acid sequence, 44 residues long: Photosystem I reaction center subunit IX (44 aa).

A helical transmembrane segment spans residues 9–29 (FIRSAPVVAAVWLSLTAGIII).

It belongs to the PsaJ family.

Its subcellular location is the cellular thylakoid membrane. In terms of biological role, may help in the organization of the PsaE and PsaF subunits. This Prochlorococcus marinus subsp. pastoris (strain CCMP1986 / NIES-2087 / MED4) protein is Photosystem I reaction center subunit IX.